We begin with the raw amino-acid sequence, 1097 residues long: Protease Do-like 7 (1097 aa).

The interval 55-243 is serine protease; that stretch reads VLRTTACRAF…LPLQRVVRAL (189 aa). Residues 269–366 enclose the PDZ domain; the sequence is MTFLHKGFDE…RGGQPLSVSV (98 aa). His524 acts as the Charge relay system in catalysis. The segment covering 546-556 has biased composition (polar residues); sequence TSSGDGSQNDF. The interval 546–577 is disordered; the sequence is TSSGDGSQNDFGSEAKKQRVDEDSSDGIAANG. Positions 558-567 are enriched in basic and acidic residues; it reads SEAKKQRVDE. Catalysis depends on Ser785, which acts as the Charge relay system.

It belongs to the peptidase S1C family.

It localises to the cytoplasm. In terms of biological role, probable serine protease. This is Protease Do-like 7 (DEGP7) from Arabidopsis thaliana (Mouse-ear cress).